We begin with the raw amino-acid sequence, 90 residues long: Putative F-box protein At5g16285 (90 aa).

The region spanning 1–46 is the F-box domain; that stretch reads MRIESLLQHDVVERILERLAVNSLPRFKAVSKQWKSTIESQFFQGK.

The protein is Putative F-box protein At5g16285 of Arabidopsis thaliana (Mouse-ear cress).